We begin with the raw amino-acid sequence, 132 residues long: Small ribosomal subunit protein uS8c (132 aa).

Belongs to the universal ribosomal protein uS8 family. In terms of assembly, part of the 30S ribosomal subunit.

The protein localises to the plastid. It localises to the chloroplast. In terms of biological role, one of the primary rRNA binding proteins, it binds directly to 16S rRNA central domain where it helps coordinate assembly of the platform of the 30S subunit. The polypeptide is Small ribosomal subunit protein uS8c (rps8) (Marchantia polymorpha (Common liverwort)).